The sequence spans 542 residues: Trans-alpha-bergamotene synthase (542 aa).

Mg(2+) contacts are provided by aspartate 295, aspartate 299, aspartate 439, threonine 443, and glutamate 447. The short motif at 295-299 (DDFYD) is the DDXXD motif element.

This sequence belongs to the terpene synthase family. Requires Mg(2+) as cofactor.

It catalyses the reaction (2E,6E)-farnesyl diphosphate = (1S,5S,6R)-alpha-bergamotene + diphosphate. The protein operates within secondary metabolite biosynthesis; terpenoid biosynthesis. Functionally, sesquiterpene synthase converting farnesyl diphosphate to trans-alpha-bergamotene as the major product. The polypeptide is Trans-alpha-bergamotene synthase (Phyla dulcis (Aztec sweet herb)).